A 201-amino-acid polypeptide reads, in one-letter code: Large ribosomal subunit protein uL4 (201 aa).

Residues 43–69 are disordered; it reads TKAQKGRSDVSGGGAKPWKQKGSGRAR.

The protein belongs to the universal ribosomal protein uL4 family. As to quaternary structure, part of the 50S ribosomal subunit.

Functionally, one of the primary rRNA binding proteins, this protein initially binds near the 5'-end of the 23S rRNA. It is important during the early stages of 50S assembly. It makes multiple contacts with different domains of the 23S rRNA in the assembled 50S subunit and ribosome. Its function is as follows. Forms part of the polypeptide exit tunnel. This Thioalkalivibrio sulfidiphilus (strain HL-EbGR7) protein is Large ribosomal subunit protein uL4.